Reading from the N-terminus, the 733-residue chain is Phosphoribosylformylglycinamidine synthase subunit PurL (733 aa).

Residue histidine 41 is part of the active site. ATP contacts are provided by tyrosine 44 and lysine 83. Mg(2+) is bound at residue glutamate 85. Residues 86–89 and arginine 108 contribute to the substrate site; that span reads SHNH. Histidine 87 functions as the Proton acceptor in the catalytic mechanism. Aspartate 109 lines the Mg(2+) pocket. The tract at residues 212–232 is disordered; it reads GASFASQELSEESEEKRPSVQ. Position 232 (glutamine 232) interacts with substrate. Aspartate 260 contributes to the Mg(2+) binding site. 304-306 lines the substrate pocket; that stretch reads ESQ. The ATP site is built by aspartate 488 and glycine 525. Position 526 (asparagine 526) interacts with Mg(2+). Serine 528 is a binding site for substrate.

This sequence belongs to the FGAMS family. Monomer. Part of the FGAM synthase complex composed of 1 PurL, 1 PurQ and 2 PurS subunits.

It is found in the cytoplasm. The enzyme catalyses N(2)-formyl-N(1)-(5-phospho-beta-D-ribosyl)glycinamide + L-glutamine + ATP + H2O = 2-formamido-N(1)-(5-O-phospho-beta-D-ribosyl)acetamidine + L-glutamate + ADP + phosphate + H(+). It participates in purine metabolism; IMP biosynthesis via de novo pathway; 5-amino-1-(5-phospho-D-ribosyl)imidazole from N(2)-formyl-N(1)-(5-phospho-D-ribosyl)glycinamide: step 1/2. In terms of biological role, part of the phosphoribosylformylglycinamidine synthase complex involved in the purines biosynthetic pathway. Catalyzes the ATP-dependent conversion of formylglycinamide ribonucleotide (FGAR) and glutamine to yield formylglycinamidine ribonucleotide (FGAM) and glutamate. The FGAM synthase complex is composed of three subunits. PurQ produces an ammonia molecule by converting glutamine to glutamate. PurL transfers the ammonia molecule to FGAR to form FGAM in an ATP-dependent manner. PurS interacts with PurQ and PurL and is thought to assist in the transfer of the ammonia molecule from PurQ to PurL. The chain is Phosphoribosylformylglycinamidine synthase subunit PurL from Thermoanaerobacter pseudethanolicus (strain ATCC 33223 / 39E) (Clostridium thermohydrosulfuricum).